A 124-amino-acid polypeptide reads, in one-letter code: Translation initiation factor 5A (124 aa).

The segment at 27–53 is disordered; sequence TSYSTSKPGKHGSAKARVEGTGVFDGQ. Position 36 is a hypusine (lysine 36).

The protein belongs to the eIF-5A family.

The protein localises to the cytoplasm. Its function is as follows. Functions by promoting the formation of the first peptide bond. This chain is Translation initiation factor 5A, found in Natronomonas pharaonis (strain ATCC 35678 / DSM 2160 / CIP 103997 / JCM 8858 / NBRC 14720 / NCIMB 2260 / Gabara) (Halobacterium pharaonis).